Here is a 123-residue protein sequence, read N- to C-terminus: UPF0299 membrane protein VV1471 (123 aa).

4 helical membrane-spanning segments follow: residues 8–28, 35–55, 71–91, and 94–114; these read LFGL…GSGI, SVPG…IGLV, MILL…MLIA, and LPII…LGWL.

It belongs to the UPF0299 family.

Its subcellular location is the cell inner membrane. The chain is UPF0299 membrane protein VV1471 from Vibrio vulnificus (strain YJ016).